Here is a 275-residue protein sequence, read N- to C-terminus: Thiazole synthase (275 aa).

Residue lysine 116 is the Schiff-base intermediate with DXP of the active site. Residues glycine 177, 203–204, and 225–226 each bind 1-deoxy-D-xylulose 5-phosphate; these read AG and NT.

This sequence belongs to the ThiG family. Homotetramer. Forms heterodimers with either ThiH or ThiS.

The protein resides in the cytoplasm. The enzyme catalyses [ThiS sulfur-carrier protein]-C-terminal-Gly-aminoethanethioate + 2-iminoacetate + 1-deoxy-D-xylulose 5-phosphate = [ThiS sulfur-carrier protein]-C-terminal Gly-Gly + 2-[(2R,5Z)-2-carboxy-4-methylthiazol-5(2H)-ylidene]ethyl phosphate + 2 H2O + H(+). It participates in cofactor biosynthesis; thiamine diphosphate biosynthesis. Functionally, catalyzes the rearrangement of 1-deoxy-D-xylulose 5-phosphate (DXP) to produce the thiazole phosphate moiety of thiamine. Sulfur is provided by the thiocarboxylate moiety of the carrier protein ThiS. In vitro, sulfur can be provided by H(2)S. This Acaryochloris marina (strain MBIC 11017) protein is Thiazole synthase.